A 157-amino-acid chain; its full sequence is 2-C-methyl-D-erythritol 2,4-cyclodiphosphate synthase (157 aa).

The a divalent metal cation site is built by aspartate 8 and histidine 10. Residues 8–10 (DVH) and 34–35 (HS) contribute to the 4-CDP-2-C-methyl-D-erythritol 2-phosphate site. Histidine 42 is a binding site for a divalent metal cation. Residues 56–58 (DIG), 61–65 (FPDTD), 100–106 (AQKPKMA), 132–135 (TTEE), and phenylalanine 139 contribute to the 4-CDP-2-C-methyl-D-erythritol 2-phosphate site.

The protein belongs to the IspF family. In terms of assembly, homotrimer. The cofactor is a divalent metal cation.

It carries out the reaction 4-CDP-2-C-methyl-D-erythritol 2-phosphate = 2-C-methyl-D-erythritol 2,4-cyclic diphosphate + CMP. It participates in isoprenoid biosynthesis; isopentenyl diphosphate biosynthesis via DXP pathway; isopentenyl diphosphate from 1-deoxy-D-xylulose 5-phosphate: step 4/6. Functionally, involved in the biosynthesis of isopentenyl diphosphate (IPP) and dimethylallyl diphosphate (DMAPP), two major building blocks of isoprenoid compounds. Catalyzes the conversion of 4-diphosphocytidyl-2-C-methyl-D-erythritol 2-phosphate (CDP-ME2P) to 2-C-methyl-D-erythritol 2,4-cyclodiphosphate (ME-CPP) with a corresponding release of cytidine 5-monophosphate (CMP). The chain is 2-C-methyl-D-erythritol 2,4-cyclodiphosphate synthase from Clostridium novyi (strain NT).